The primary structure comprises 279 residues: 5'-nucleotidase SurE 1 (279 aa).

A divalent metal cation-binding residues include aspartate 12, aspartate 13, serine 45, and asparagine 103.

This sequence belongs to the SurE nucleotidase family. Requires a divalent metal cation as cofactor.

It is found in the cytoplasm. The enzyme catalyses a ribonucleoside 5'-phosphate + H2O = a ribonucleoside + phosphate. In terms of biological role, nucleotidase that shows phosphatase activity on nucleoside 5'-monophosphates. The sequence is that of 5'-nucleotidase SurE 1 from Chlamydia caviae (strain ATCC VR-813 / DSM 19441 / 03DC25 / GPIC) (Chlamydophila caviae).